The primary structure comprises 1088 residues: DNA-directed RNA polymerase subunit beta (1088 aa).

This sequence belongs to the RNA polymerase beta chain family. In terms of assembly, in plastids the minimal PEP RNA polymerase catalytic core is composed of four subunits: alpha, beta, beta', and beta''. When a (nuclear-encoded) sigma factor is associated with the core the holoenzyme is formed, which can initiate transcription.

It is found in the plastid. The protein localises to the chloroplast. It carries out the reaction RNA(n) + a ribonucleoside 5'-triphosphate = RNA(n+1) + diphosphate. Functionally, DNA-dependent RNA polymerase catalyzes the transcription of DNA into RNA using the four ribonucleoside triphosphates as substrates. The protein is DNA-directed RNA polymerase subunit beta of Ostreococcus tauri.